A 191-amino-acid chain; its full sequence is Inosine triphosphate pyrophosphatase (191 aa).

Residue 15-20 (TGNTNK) coordinates ITP. E43 serves as a coordination point for Mg(2+). Residues K55, 71–72 (DT), K88, 147–150 (FGWD), K168, and 173–174 (HR) each bind ITP.

The protein belongs to the HAM1 NTPase family. Homodimer. Mg(2+) is required as a cofactor. Mn(2+) serves as cofactor.

Its subcellular location is the cytoplasm. The protein localises to the nucleus. The enzyme catalyses ITP + H2O = IMP + diphosphate + H(+). It carries out the reaction dITP + H2O = dIMP + diphosphate + H(+). It catalyses the reaction XTP + H2O = XMP + diphosphate + H(+). Pyrophosphatase that hydrolyzes non-canonical purine nucleotides such as inosine triphosphate (ITP), deoxyinosine triphosphate (dITP) or xanthosine 5'-triphosphate (XTP) to their respective monophosphate derivatives. The enzyme does not distinguish between the deoxy- and ribose forms. Probably excludes non-canonical purines from RNA and DNA precursor pools, thus preventing their incorporation into RNA and DNA and avoiding chromosomal lesions. The chain is Inosine triphosphate pyrophosphatase from Chaetomium globosum (strain ATCC 6205 / CBS 148.51 / DSM 1962 / NBRC 6347 / NRRL 1970) (Soil fungus).